The sequence spans 386 residues: L-lactate dehydrogenase (386 aa).

The FMN hydroxy acid dehydrogenase domain occupies 1-380 (MIISASTDYR…TSDSLVQVTQ (380 aa)). Tyr24 provides a ligand contact to substrate. Residues Ser106 and Gln127 each coordinate FMN. Tyr129 serves as a coordination point for substrate. Residue Thr155 participates in FMN binding. Arg164 is a substrate binding site. Lys251 contributes to the FMN binding site. The active-site Proton acceptor is His275. Position 278 (Arg278) interacts with substrate. 306–330 (DSGIRSGLDVVRMIALGADGVMLGR) contributes to the FMN binding site.

It belongs to the FMN-dependent alpha-hydroxy acid dehydrogenase family. It depends on FMN as a cofactor.

The protein resides in the cell inner membrane. The catalysed reaction is (S)-lactate + A = pyruvate + AH2. Its function is as follows. Catalyzes the conversion of L-lactate to pyruvate. Is coupled to the respiratory chain. The chain is L-lactate dehydrogenase from Pectobacterium atrosepticum (strain SCRI 1043 / ATCC BAA-672) (Erwinia carotovora subsp. atroseptica).